A 247-amino-acid chain; its full sequence is uncharacterized protein (247 aa).

NAD(+) is bound by residues Leu19, Asp38, Asp63, and Val64. Residue Ser142 participates in substrate binding. NAD(+) contacts are provided by Tyr155, Lys159, and Ser190. The active-site Proton acceptor is the Tyr155.

The protein belongs to the short-chain dehydrogenases/reductases (SDR) family.

This is an uncharacterized protein from Mycobacterium bovis (strain ATCC BAA-935 / AF2122/97).